The chain runs to 884 residues: Exocyst complex component 2 (884 aa).

Residues 1–11 (MEENAQARERL) show a composition bias toward basic and acidic residues. A disordered region spans residues 1 to 27 (MEENAQARERLPPTVTGLSPTEGVPGT). Positions 13 to 98 (PTVTGLSPTE…GSSNVKFRVF (86 aa)) constitute an IPT/TIG domain. 2 coiled-coil regions span residues 178 to 206 (ADAT…SEEM) and 846 to 874 (NQRL…AENL).

This sequence belongs to the SEC5 family. The exocyst complex is composed of sec-3/exoc1, sec-5/exoc2, sec-6/exoc3, sec-8/exoc4, sec-10/exoc5, sec-15/exoc6, exo-70/exoc7 and exo-84/exoc8.

Functionally, component of the exocyst complex involved in the docking of exocytic vesicles with fusion sites on the plasma membrane. In Caenorhabditis elegans, this protein is Exocyst complex component 2 (sec-5).